Consider the following 529-residue polypeptide: Arginine--tRNA ligase (529 aa).

The 'HIGH' region motif lies at 113–123 (ANPTGPLHIGH).

The protein belongs to the class-I aminoacyl-tRNA synthetase family. Monomer.

The protein resides in the cytoplasm. It catalyses the reaction tRNA(Arg) + L-arginine + ATP = L-arginyl-tRNA(Arg) + AMP + diphosphate. This Campylobacter curvus (strain 525.92) protein is Arginine--tRNA ligase.